A 54-amino-acid chain; its full sequence is Chymosin (54 aa).

Positions 1–27 (SEITRVPLHKGKSLRKALKEHGLLEBF) are cleaved as a propeptide — activation peptide.

The protein belongs to the peptidase A1 family. As to quaternary structure, monomer.

The catalysed reaction is Broad specificity similar to that of pepsin A. Clots milk by cleavage of a single 104-Ser-Phe-|-Met-Ala-107 bond in kappa-chain of casein.. In terms of biological role, chymosin is synthesized in the mucosa of the stomach. The enzyme hydrolyzes casein to paracasein. The protein is Chymosin (CYM) of Felis catus (Cat).